Reading from the N-terminus, the 241-residue chain is Protocatechuate 3,4-dioxygenase beta chain (241 aa).

4 residues coordinate Fe cation: Y109, Y148, H161, and H163.

Belongs to the intradiol ring-cleavage dioxygenase family. The enzyme is an oligomer of 12 copies of the alpha and beta chains. It depends on Fe(3+) as a cofactor.

It carries out the reaction 3,4-dihydroxybenzoate + O2 = 3-carboxy-cis,cis-muconate + 2 H(+). Its pathway is aromatic compound metabolism; beta-ketoadipate pathway; 3-carboxy-cis,cis-muconate from 3,4-dihydroxybenzoate: step 1/1. Its function is as follows. Plays an essential role in the utilization of numerous aromatic and hydroaromatic compounds via the beta-ketoadipate pathway. This chain is Protocatechuate 3,4-dioxygenase beta chain (pcaH), found in Acinetobacter baylyi (strain ATCC 33305 / BD413 / ADP1).